We begin with the raw amino-acid sequence, 216 residues long: Adenylate kinase (216 aa).

Residue 10 to 15 (GAGKGT) participates in ATP binding. Residues 30-59 (STGDMFRAAIKEGTPLGLQAKEYMDRGDLV) are NMP. Residues threonine 31, arginine 36, 57-59 (DLV), 85-88 (GFPR), and glutamine 92 contribute to the AMP site. The LID stretch occupies residues 126-163 (GRRICKNCGATYHLVFNPPAKSGVCDKCGGELYQRADD). Arginine 127 provides a ligand contact to ATP. Cysteine 130 and cysteine 133 together coordinate Zn(2+). 136–137 (TY) provides a ligand contact to ATP. Cysteine 150 and cysteine 153 together coordinate Zn(2+). Residues arginine 160 and arginine 171 each contribute to the AMP site. Glutamine 199 contributes to the ATP binding site.

The protein belongs to the adenylate kinase family. As to quaternary structure, monomer.

It localises to the cytoplasm. It catalyses the reaction AMP + ATP = 2 ADP. It participates in purine metabolism; AMP biosynthesis via salvage pathway; AMP from ADP: step 1/1. Its function is as follows. Catalyzes the reversible transfer of the terminal phosphate group between ATP and AMP. Plays an important role in cellular energy homeostasis and in adenine nucleotide metabolism. This is Adenylate kinase from Geobacillus sp. (strain WCH70).